The sequence spans 172 residues: Shikimate kinase (172 aa).

Position 14–19 (14–19) interacts with ATP; sequence GAGKST. Serine 18 lines the Mg(2+) pocket. Substrate is bound by residues aspartate 36, arginine 60, and glycine 82. Position 120 (arginine 120) interacts with ATP. Residue arginine 140 coordinates substrate. An ATP-binding site is contributed by glutamine 157.

It belongs to the shikimate kinase family. As to quaternary structure, monomer. Mg(2+) is required as a cofactor.

It is found in the cytoplasm. The catalysed reaction is shikimate + ATP = 3-phosphoshikimate + ADP + H(+). The protein operates within metabolic intermediate biosynthesis; chorismate biosynthesis; chorismate from D-erythrose 4-phosphate and phosphoenolpyruvate: step 5/7. In terms of biological role, catalyzes the specific phosphorylation of the 3-hydroxyl group of shikimic acid using ATP as a cosubstrate. This is Shikimate kinase from Colwellia psychrerythraea (strain 34H / ATCC BAA-681) (Vibrio psychroerythus).